The following is a 753-amino-acid chain: ATPase family gene 2 protein homolog B (753 aa).

Methionine 1 is modified (N-acetylmethionine). Residues 1 to 189 (MAPDSDPFPE…PRTRVSLGGE (189 aa)) form a required for interaction with AFG2A and CINP region. Positions 171–203 (SPDPAGLVTPRTRVSLGGEPPSEAQPQPEVPLG) are disordered. ATP is bound by residues 241-248 (GPPGVGKT) and 505-512 (GPPGCAKT).

This sequence belongs to the AAA ATPase family. AFG2 subfamily. Part of the 55LCC heterohexameric ATPase complex composed at least of AIRIM, AFG2A, AFG2B and CINP. Associates with pre-60S ribosomal particles. As to expression, expressed in both neurons and glia during embryonic and adult stages of brain development.

The protein resides in the cytoplasm. Its subcellular location is the cytoskeleton. It localises to the spindle. The protein localises to the nucleus. It carries out the reaction ATP + H2O = ADP + phosphate + H(+). Its activity is regulated as follows. In the context of 55LCC heterohexameric ATPase complex, the ATPase activity is stimulated by DNA binding and inhibited in presence of RNA. Functionally, ATP-dependent chaperone part of the 55LCC heterohexameric ATPase complex which is chromatin-associated and promotes replisome proteostasis to maintain replication fork progression and genome stability. Required for replication fork progression, sister chromatid cohesion, and chromosome stability. The ATPase activity is specifically enhanced by replication fork DNA and is coupled to cysteine protease-dependent cleavage of replisome substrates in response to replication fork damage. Uses ATPase activity to process replisome substrates in S-phase, facilitating their proteolytic turnover from chromatin to ensure DNA replication and mitotic fidelity. Plays an essential role in the cytoplasmic maturation steps of pre-60S ribosomal particles by promoting the release of shuttling protein RSL24D1/RLP24 from the pre-ribosomal particles. This chain is ATPase family gene 2 protein homolog B, found in Homo sapiens (Human).